The chain runs to 258 residues: Phosphosulfolactate synthase (258 aa).

This sequence belongs to the phosphosulfolactate synthase family.

It carries out the reaction (2R)-O-phospho-3-sulfolactate = phosphoenolpyruvate + sulfite + H(+). It participates in cofactor biosynthesis; coenzyme M biosynthesis; sulfoacetaldehyde from phosphoenolpyruvate and sulfite: step 1/4. Catalyzes the addition of sulfite to phosphoenolpyruvate (PEP) to yield (2R)-phospho-3-sulfolactate (PSL). In Methanothermobacter thermautotrophicus (strain ATCC 29096 / DSM 1053 / JCM 10044 / NBRC 100330 / Delta H) (Methanobacterium thermoautotrophicum), this protein is Phosphosulfolactate synthase (comA).